The primary structure comprises 475 residues: Ribulose bisphosphate carboxylase large chain (475 aa).

Residues 1-2 constitute a propeptide that is removed on maturation; sequence MS. N-acetylproline is present on Pro-3. The residue at position 14 (Lys-14) is an N6,N6,N6-trimethyllysine. Substrate-binding residues include Asn-123 and Thr-173. Lys-175 acts as the Proton acceptor in catalysis. Lys-177 is a binding site for substrate. Residues Lys-201, Asp-203, and Glu-204 each contribute to the Mg(2+) site. Lys-201 is modified (N6-carboxylysine). The Proton acceptor role is filled by His-294. Positions 295, 327, and 379 each coordinate substrate.

Belongs to the RuBisCO large chain family. Type I subfamily. In terms of assembly, heterohexadecamer of 8 large chains and 8 small chains; disulfide-linked. The disulfide link is formed within the large subunit homodimers. It depends on Mg(2+) as a cofactor. In terms of processing, the disulfide bond which can form in the large chain dimeric partners within the hexadecamer appears to be associated with oxidative stress and protein turnover.

It is found in the plastid. The protein localises to the chloroplast. It carries out the reaction 2 (2R)-3-phosphoglycerate + 2 H(+) = D-ribulose 1,5-bisphosphate + CO2 + H2O. The catalysed reaction is D-ribulose 1,5-bisphosphate + O2 = 2-phosphoglycolate + (2R)-3-phosphoglycerate + 2 H(+). In terms of biological role, ruBisCO catalyzes two reactions: the carboxylation of D-ribulose 1,5-bisphosphate, the primary event in carbon dioxide fixation, as well as the oxidative fragmentation of the pentose substrate in the photorespiration process. Both reactions occur simultaneously and in competition at the same active site. This is Ribulose bisphosphate carboxylase large chain from Equisetum arvense (Field horsetail).